The chain runs to 40 residues: Large ribosomal subunit protein bL36 (40 aa).

The protein belongs to the bacterial ribosomal protein bL36 family.

The chain is Large ribosomal subunit protein bL36 from Coxiella burnetii (strain Dugway 5J108-111).